Consider the following 194-residue polypeptide: Protein GrpE (194 aa).

Over residues 1–12 (MNKQKNNRERTP) the composition is skewed to basic and acidic residues. A disordered region spans residues 1–44 (MNKQKNNRERTPQPEQDTERDEQLTNSHENDIDSAPAAEENDKV).

This sequence belongs to the GrpE family. As to quaternary structure, homodimer.

Its subcellular location is the cytoplasm. Functionally, participates actively in the response to hyperosmotic and heat shock by preventing the aggregation of stress-denatured proteins, in association with DnaK and GrpE. It is the nucleotide exchange factor for DnaK and may function as a thermosensor. Unfolded proteins bind initially to DnaJ; upon interaction with the DnaJ-bound protein, DnaK hydrolyzes its bound ATP, resulting in the formation of a stable complex. GrpE releases ADP from DnaK; ATP binding to DnaK triggers the release of the substrate protein, thus completing the reaction cycle. Several rounds of ATP-dependent interactions between DnaJ, DnaK and GrpE are required for fully efficient folding. This chain is Protein GrpE, found in Porphyromonas gingivalis (strain ATCC 33277 / DSM 20709 / CIP 103683 / JCM 12257 / NCTC 11834 / 2561).